The sequence spans 184 residues: ATP synthase subunit b (184 aa).

A helical membrane pass occupies residues 24–44 (ILVVVVGFALLMFIVIKFIVP).

The protein belongs to the ATPase B chain family. In terms of assembly, F-type ATPases have 2 components, F(1) - the catalytic core - and F(0) - the membrane proton channel. F(1) has five subunits: alpha(3), beta(3), gamma(1), delta(1), epsilon(1). F(0) has three main subunits: a(1), b(2) and c(10-14). The alpha and beta chains form an alternating ring which encloses part of the gamma chain. F(1) is attached to F(0) by a central stalk formed by the gamma and epsilon chains, while a peripheral stalk is formed by the delta and b chains.

The protein localises to the cell membrane. F(1)F(0) ATP synthase produces ATP from ADP in the presence of a proton or sodium gradient. F-type ATPases consist of two structural domains, F(1) containing the extramembraneous catalytic core and F(0) containing the membrane proton channel, linked together by a central stalk and a peripheral stalk. During catalysis, ATP synthesis in the catalytic domain of F(1) is coupled via a rotary mechanism of the central stalk subunits to proton translocation. Functionally, component of the F(0) channel, it forms part of the peripheral stalk, linking F(1) to F(0). The polypeptide is ATP synthase subunit b (atpF) (Micrococcus luteus (strain ATCC 4698 / DSM 20030 / JCM 1464 / CCM 169 / CCUG 5858 / IAM 1056 / NBRC 3333 / NCIMB 9278 / NCTC 2665 / VKM Ac-2230) (Micrococcus lysodeikticus)).